A 183-amino-acid chain; its full sequence is Dual-action ribosomal maturation protein DarP (183 aa).

It belongs to the DarP family.

It localises to the cytoplasm. In terms of biological role, member of a network of 50S ribosomal subunit biogenesis factors which assembles along the 30S-50S interface, preventing incorrect 23S rRNA structures from forming. Promotes peptidyl transferase center (PTC) maturation. This Shigella flexneri protein is Dual-action ribosomal maturation protein DarP.